We begin with the raw amino-acid sequence, 210 residues long: Transposable element activator uncharacterized 23 kDa protein (210 aa).

A compositionally biased stretch (basic and acidic residues) spans 67–78 (SGRMGGPRRDGR). The interval 67-87 (SGRMGGPRRDGRVASSGVEGG) is disordered.

The protein is Transposable element activator uncharacterized 23 kDa protein of Zea mays (Maize).